A 790-amino-acid chain; its full sequence is Tumor necrosis factor alpha-induced protein 3 (790 aa).

The residue at position 2 (A2) is an N-acetylalanine. Positions 58-300 (PQFREIIHKA…LTDPENEMKE (243 aa)) are TRAF-binding. Positions 92–263 (LVALKTNGDG…SHHFVPLVTL (172 aa)) constitute an OTU domain. D100 is a catalytic residue. C103 (nucleophile) is an active-site residue. Interaction with ubiquitin regions lie at residues 157–159 (LCY), 190–192 (SLE), and 224–227 (FAPL). H256 acts as the Proton acceptor in catalysis. The span at 357–368 (QENSEQGRREGH) shows a compositional bias: basic and acidic residues. The segment at 357 to 377 (QENSEQGRREGHAQNPMEPSV) is disordered. Residues 369 to 775 (AQNPMEPSVP…ACDHFGNAKC (407 aa)) are interaction with TNIP1. The A20-type 1 zinc finger occupies 381-416 (SLMDVKCETPNCPFFMSVNTQPLCHECSERRQKNQN). The interval 386-453 (KCETPNCPFF…EPLAWNPEES (68 aa)) is interaction with RIPK1. Zn(2+)-binding residues include C387, C392, C404, and C407. Disordered stretches follow at residues 415-434 (QNKL…PGMA) and 447-468 (AWNP…PSPF). A Phosphoserine modification is found at S459. 2 A20-type zinc fingers span residues 472-507 (ETTA…LHAS) and 515-548 (HLDP…AEAS). Zn(2+) contacts are provided by C478, C483, C495, C498, C521, C524, C536, and C539. Residues 550 to 583 (SLSTSLPPSCHQRSKSDPSRLVRSPSPHSCHRAG) form a disordered region. Residue S575 is modified to Phosphoserine. The segment at 601-636 (RTGTSKCRKAGCVYFGTPENKGFCTLCFIEYRENKH) adopts an A20-type 4 zinc-finger fold. The required for proteasomal degradation of UBE2N and UBE2D3, TRAF6 deubiquitination, and TAX1BP1 interaction with UBE2N stretch occupies residues 605 to 655 (SKCRKAGCVYFGTPENKGFCTLCFIEYRENKHFAAASGKVSPTASRFQNTI). Residues 606-790 (KCRKAGCVYF…ECFQFKQMYG (185 aa)) form a sufficient for inhibitory activity of TNF-induced NF-kappa-B activity region. Zn(2+) contacts are provided by C607, C612, C624, and C627. At S645 the chain carries Phosphoserine. The A20-type 5 zinc-finger motif lies at 651–686 (FQNTIPCLGRECGTLGSTMFEGYCQKCFIEAQNQRF). Positions 657, 662, 674, and 677 each coordinate Zn(2+). A compositionally biased stretch (basic and acidic residues) spans 689–705 (AKRTEEQLRSSQRRDVP). The segment at 689–712 (AKRTEEQLRSSQRRDVPRTTQSTS) is disordered. A required for lysosomal localization and for TRAF2 lysosomal degradation region spans residues 697 to 790 (RSSQRRDVPR…ECFQFKQMYG (94 aa)). A20-type zinc fingers lie at residues 710-745 (STSR…RMGP) and 756-790 (DPPK…QMYG). The Zn(2+) site is built by C716, C721, C733, C736, C762, C767, C779, and C782.

It belongs to the peptidase C64 family. As to quaternary structure, homodimer. Interacts with TNIP1, TAX1BP1 and TRAF2. Interacts with RNF11, ITCH and TAX1BP1 only after TNF stimulation; these interaction are transient and they are lost after 1 hour of stimulation with TNF. Interacts with YWHAZ and YWHAH. Interacts with IKBKG; the interaction is induced by TNF stimulation and by polyubiquitin. Interacts with RIPK1. Interacts with UBE2N; the interaction requires TAX1BP1. Interacts with TRAF6; the interaction is inhibited by HTLV-1 protein Tax. Post-translationally, proteolytically cleaved by MALT1 upon TCR stimulation; disrupts NF-kappa-B inhibitory function and results in increased IL-2 production. It is proposed that only a fraction of TNFAIP3 colocalized with TCR and CBM complex is cleaved, leaving the main TNFAIP3 pool intact.

It is found in the cytoplasm. Its subcellular location is the nucleus. It localises to the lysosome. The catalysed reaction is Thiol-dependent hydrolysis of ester, thioester, amide, peptide and isopeptide bonds formed by the C-terminal Gly of ubiquitin (a 76-residue protein attached to proteins as an intracellular targeting signal).. Functionally, ubiquitin-editing enzyme that contains both ubiquitin ligase and deubiquitinase activities. Involved in immune and inflammatory responses signaled by cytokines, such as TNF-alpha and IL-1 beta, or pathogens via Toll-like receptors (TLRs) through terminating NF-kappa-B activity. Essential component of a ubiquitin-editing protein complex, comprising also RNF11, ITCH and TAX1BP1, that ensures the transient nature of inflammatory signaling pathways. In cooperation with TAX1BP1 promotes disassembly of E2-E3 ubiquitin protein ligase complexes in IL-1R and TNFR-1 pathways; affected are at least E3 ligases TRAF6, TRAF2 and BIRC2, and E2 ubiquitin-conjugating enzymes UBE2N and UBE2D3. In cooperation with TAX1BP1 promotes ubiquitination of UBE2N and proteasomal degradation of UBE2N and UBE2D3. Upon TNF stimulation, deubiquitinates 'Lys-63'-polyubiquitin chains on RIPK1 and catalyzes the formation of 'Lys-48'-polyubiquitin chains. This leads to RIPK1 proteasomal degradation and consequently termination of the TNF- or LPS-mediated activation of NF-kappa-B. Deubiquitinates TRAF6 probably acting on 'Lys-63'-linked polyubiquitin. Upon T-cell receptor (TCR)-mediated T-cell activation, deubiquitinates 'Lys-63'-polyubiquitin chains on MALT1 thereby mediating disassociation of the CBM (CARD11:BCL10:MALT1) and IKK complexes and preventing sustained IKK activation. Deubiquitinates NEMO/IKBKG; the function is facilitated by TNIP1 and leads to inhibition of NF-kappa-B activation. Upon stimulation by bacterial peptidoglycans, probably deubiquitinates RIPK2. Can also inhibit I-kappa-B-kinase (IKK) through a non-catalytic mechanism which involves polyubiquitin; polyubiquitin promotes association with IKBKG and prevents IKK MAP3K7-mediated phosphorylation. Targets TRAF2 for lysosomal degradation. In vitro able to deubiquitinate 'Lys-11'-, 'Lys-48'- and 'Lys-63' polyubiquitin chains. Inhibitor of programmed cell death. Has a role in the function of the lymphoid system. Required for LPS-induced production of pro-inflammatory cytokines and IFN beta in LPS-tolerized macrophages. The chain is Tumor necrosis factor alpha-induced protein 3 (TNFAIP3) from Homo sapiens (Human).